Reading from the N-terminus, the 433-residue chain is Inositol hexakisphosphate kinase 1 (433 aa).

The disordered stretch occupies residues 100–160 (ETVEQDDTPE…SPKVELHSHS (61 aa)). The segment covering 113-123 (PRRKHSRRSLH) has biased composition (basic residues). The span at 139–149 (SFETSESSQEA) shows a compositional bias: polar residues. Residues 150–160 (KSPKVELHSHS) are compositionally biased toward basic and acidic residues. Position 151 is a phosphoserine (S151). 220–228 (PCVLDLKMG) contributes to the substrate binding site. Positions 359-383 (EVPPPCGPSTSPSSTSLEAGPSSPP) are disordered.

The protein belongs to the inositol phosphokinase (IPK) family. In terms of tissue distribution, highly expressed in brain and testis. Detected at much lower levels in heart, kidney, liver, lung and spleen.

Its subcellular location is the cytoplasm. The protein localises to the nucleus. The catalysed reaction is 1D-myo-inositol hexakisphosphate + ATP = 5-diphospho-1D-myo-inositol 1,2,3,4,6-pentakisphosphate + ADP. It catalyses the reaction 1-diphospho-1D-myo-inositol 2,3,4,5,6-pentakisphosphate + ATP + H(+) = 1,5-bis(diphospho)-1D-myo-inositol 2,3,4,6-tetrakisphosphate + ADP. Its function is as follows. Converts inositol hexakisphosphate (InsP6) to diphosphoinositol pentakisphosphate (InsP7/PP-InsP5). Converts 1,3,4,5,6-pentakisphosphate (InsP5) to PP-InsP4. This is Inositol hexakisphosphate kinase 1 (Ip6k1) from Mus musculus (Mouse).